The chain runs to 161 residues: MGTTWRSPGRLRLALCLAGLALSLYALHVKAARARNEDYRALCDVGTAISCSRVFSSRWGRGFGLVEHVLGADSILNQSNSIFGCMFYTIQLLLGCLRGRWASILLILSSLVSVAGSLYLAWILFFVLYDFCIVCITTYAINAGLMLLSFQKVPEHKVKKP.

The Cytoplasmic portion of the chain corresponds to 1–9 (MGTTWRSPG). The helical transmembrane segment at 10-29 (RLRLALCLAGLALSLYALHV) threads the bilayer. Over 30–80 (KAARARNEDYRALCDVGTAISCSRVFSSRWGRGFGLVEHVLGADSILNQSN) the chain is Lumenal. Cys43 and Cys51 form a disulfide bridge. Residue Asn80 participates in (S)-warfarin binding. The helical transmembrane segment at 81 to 95 (SIFGCMFYTIQLLLG) threads the bilayer. Over 96 to 100 (CLRGR) the chain is Cytoplasmic. Residues 101–128 (WASILLILSSLVSVAGSLYLAWILFFVL) traverse the membrane as a helical segment. Over 129-131 (YDF) the chain is Lumenal. Cys132 and Cys135 are oxidised to a cystine. The chain crosses the membrane as a helical span at residues 132 to 153 (CIVCITTYAINAGLMLLSFQKV). Phylloquinone contacts are provided by Cys135 and Tyr139. A (S)-warfarin-binding site is contributed by Tyr139. The Cytoplasmic segment spans residues 154-161 (PEHKVKKP).

It belongs to the VKOR family. As to expression, highly expressed in liver. Detected at lower levels in lung, kidney and testis.

The protein localises to the endoplasmic reticulum membrane. It catalyses the reaction phylloquinone + [protein]-disulfide + H2O = 2,3-epoxyphylloquinone + [protein]-dithiol. The catalysed reaction is phylloquinol + [protein]-disulfide = phylloquinone + [protein]-dithiol. Its activity is regulated as follows. Inhibited by warfarin (coumadin). Warfarin locks VKORC1 in both redox states into the closed conformation. Its function is as follows. Involved in vitamin K metabolism. Catalytic subunit of the vitamin K epoxide reductase (VKOR) complex which reduces inactive vitamin K 2,3-epoxide to active vitamin K. Vitamin K is required for the gamma-carboxylation of various proteins, including clotting factors, and is required for normal blood coagulation, but also for normal bone development. The sequence is that of Vitamin K epoxide reductase complex subunit 1 (Vkorc1) from Rattus norvegicus (Rat).